A 299-amino-acid polypeptide reads, in one-letter code: Probable tyrosine phosphatase protein J4 (299 aa).

Positions 16–289 (VEALDFLSFM…VYCYQALYVW (274 aa)) constitute a Tyrosine-protein phosphatase domain. The Phosphocysteine intermediate role is filled by Cys-230.

Belongs to the protein-tyrosine phosphatase family.

It carries out the reaction O-phospho-L-tyrosyl-[protein] + H2O = L-tyrosyl-[protein] + phosphate. This is Probable tyrosine phosphatase protein J4 (J5) from Microplitis demolitor bracovirus (isolate Webb) (MdBV).